The chain runs to 782 residues: Cleavage and polyadenylation specificity factor subunit 2 (782 aa).

Residues 407-416 (KKLEQSKEAD) show a composition bias toward basic and acidic residues. A disordered region spans residues 407–449 (KKLEQSKEADIDSSDESDIEEDIDQPSAHKTKHDLMMKGEGSR). Acidic residues predominate over residues 417-430 (IDSSDESDIEEDID). 3 positions are modified to phosphoserine: S419, S420, and S423. A compositionally biased stretch (basic and acidic residues) spans 439–449 (HDLMMKGEGSR). S660 is subject to Phosphoserine.

This sequence belongs to the metallo-beta-lactamase superfamily. RNA-metabolizing metallo-beta-lactamase-like family. CPSF2/YSH1 subfamily. Component of the cleavage and polyadenylation specificity factor (CPSF) complex, composed of CPSF1, CPSF2, CPSF3, CPSF4 and FIP1L1. Interacts with CPSF3, CSTF2 and SYMPK. Interacts with ZC3H3.

The protein resides in the nucleus. Its function is as follows. Component of the cleavage and polyadenylation specificity factor (CPSF) complex that play a key role in pre-mRNA 3'-end formation, recognizing the AAUAAA signal sequence and interacting with poly(A) polymerase and other factors to bring about cleavage and poly(A) addition. Involved in the histone 3' end pre-mRNA processing. The chain is Cleavage and polyadenylation specificity factor subunit 2 (CPSF2) from Homo sapiens (Human).